The sequence spans 64 residues: Large ribosomal subunit protein uL29 (64 aa).

It belongs to the universal ribosomal protein uL29 family.

This chain is Large ribosomal subunit protein uL29, found in Teredinibacter turnerae (strain ATCC 39867 / T7901).